The primary structure comprises 246 residues: UDP-N-acetyl-D-mannosaminuronic acid transferase (246 aa).

The protein belongs to the glycosyltransferase 26 family.

The enzyme catalyses UDP-N-acetyl-alpha-D-mannosaminouronate + N-acetyl-alpha-D-glucosaminyl-di-trans,octa-cis-undecaprenyl diphosphate = beta-D-ManNAcA-(1-&gt;4)-alpha-D-GlcNAc-di-trans,octa-cis-undecaprenyl diphosphate + UDP + H(+). The protein operates within bacterial outer membrane biogenesis; enterobacterial common antigen biosynthesis. Functionally, catalyzes the synthesis of Und-PP-GlcNAc-ManNAcA (Lipid II), the second lipid-linked intermediate involved in enterobacterial common antigen (ECA) synthesis. This Salmonella agona (strain SL483) protein is UDP-N-acetyl-D-mannosaminuronic acid transferase.